Reading from the N-terminus, the 331-residue chain is GTPase Obg (331 aa).

The Obg domain maps to 1–159 (MQFIDQARIA…RELQLELKLL (159 aa)). The OBG-type G domain occupies 160 to 328 (AEVGLVGLPN…LLQQVWQELG (169 aa)). Residues 166-173 (GLPNAGKS), 191-195 (FTTLV), 213-216 (DIPG), 280-283 (SKSE), and 309-311 (SAV) contribute to the GTP site. Mg(2+) is bound by residues serine 173 and threonine 193.

This sequence belongs to the TRAFAC class OBG-HflX-like GTPase superfamily. OBG GTPase family. As to quaternary structure, monomer. Mg(2+) serves as cofactor.

It localises to the cytoplasm. In terms of biological role, an essential GTPase which binds GTP, GDP and possibly (p)ppGpp with moderate affinity, with high nucleotide exchange rates and a fairly low GTP hydrolysis rate. Plays a role in control of the cell cycle, stress response, ribosome biogenesis and in those bacteria that undergo differentiation, in morphogenesis control. This chain is GTPase Obg, found in Synechococcus sp. (strain RCC307).